The following is a 935-amino-acid chain: MLMAPQGRSSSKKRMGLNRWKRFTRKPSPQHAFGPDNVEHWIKRVEKASEFAVSNAFFTRNSDLPRSPWGQITDWKTSEQIEDHDEIYAEAQELVNDWLDSKLKQELASDEEGDAKNTVSSVSLVPEANDHLKYDKFDDLCGYLEEEEESTTVQKFIDHLLHKNVVDSAVMEDLGRKENQDKKQQKDPRLTMEMRHKQVKENRLRREKELEYQRIQKTLKKSAFLEAQCLVQEEKKRKALEAKKEEEEIQREMVKLRREIIERRRTVKEAWKIEKKRQEENSQNSSEKLMFQSTHILLDEEKMAKERKRKLKELLIQIFKENQQCQKRYFSAWHKLILDHRIKLGKAGTLSDWKIQLKVLRAWRDYTRSQKLQRETQALENDLREENRKQQLAAEHNRKQVLRHCFTEWQHWCGAELLKRELALTKEENRKKMDALLKAASLGKLSASESSGISLPEEATAVVGPPVRNGQVTAVPPLWEKPPLGSSDCMLSPPLGRTTGNLQGSLQNVPLSAPGNKQHKTLGVEPPQLPGSNETLRTTSQKAEPLCLGHFHSRHVFQQQLIEKQKKKLQEQQKTILELKKNQRLAEAQWAAEHASAVTDTQSHLLSKPRGEEEPRTCQMLVNSPVASPGTEGSRSDSRNCLSGRKRKPKQLMTPHPILKAMEERAIQRAERRRILAEKKKKQEEEKLAQLKAQEEERQKREAEEKEAQLERKREEKRLKKMKELEKQKRIKRNQQLEAIAKEHYEGVLLRKKGLEPWKILRMQSKQNVQVAEEHYCLFLQRKYLLTWFQCSQESLARKMAQADQFYSQILLKRVIRSWLQYMTDLQEEVRKFCVRFLQKKIFRAWFNMVREVKIDSRGKHEIAAEHSDRRILWITFRTWKKFVKFMKEERVKEERRQQLRRKVVEILPDFQVPGSDHELYQQSDTWSLSKTSLL.

4 coiled-coil regions span residues 189–324 (RLTM…ENQQ), 366–438 (YTRS…ALLK), 554–589 (RHVFQQQLIEKQKKKLQEQQKTILELKKNQRLAEAQ), and 660–740 (KAME…LEAI). 2 disordered regions span residues 596–661 (SAVT…ILKA) and 678–715 (EKKKKQEEEKLAQLKAQEEERQKREAEEKEAQLERKRE).

The polypeptide is Coiled-coil domain-containing protein 191 (CCDC191) (Macaca fascicularis (Crab-eating macaque)).